Consider the following 340-residue polypeptide: L-threonine 3-dehydrogenase (340 aa).

Cysteine 38 contributes to the Zn(2+) binding site. Catalysis depends on charge relay system residues threonine 40 and histidine 43. Residues histidine 63, glutamate 64, cysteine 93, cysteine 96, cysteine 99, and cysteine 107 each contribute to the Zn(2+) site. NAD(+)-binding positions include isoleucine 175, aspartate 195, arginine 200, 262–264 (LGI), and 286–287 (IY).

The protein belongs to the zinc-containing alcohol dehydrogenase family. Homotetramer. Requires Zn(2+) as cofactor.

Its subcellular location is the cytoplasm. It carries out the reaction L-threonine + NAD(+) = (2S)-2-amino-3-oxobutanoate + NADH + H(+). The protein operates within amino-acid degradation; L-threonine degradation via oxydo-reductase pathway; glycine from L-threonine: step 1/2. Its function is as follows. Catalyzes the NAD(+)-dependent oxidation of L-threonine to 2-amino-3-ketobutyrate. In Legionella pneumophila (strain Corby), this protein is L-threonine 3-dehydrogenase.